Consider the following 246-residue polypeptide: Myelin-oligodendrocyte glycoprotein (246 aa).

The signal sequence occupies residues 1–28 (MASLLSSSLPSCLPSLLFLLLQLTSSSA). The Ig-like V-type domain occupies 29-144 (GQFRVIGPGH…EEAAMELKVE (116 aa)). Residues 29-153 (GQFRVIGPGH…EDPFYWINPG (125 aa)) lie on the Extracellular side of the membrane. Residues cysteine 52 and cysteine 126 are joined by a disulfide bond. Residue asparagine 59 is glycosylated (N-linked (GlcNAc...) asparagine). A helical transmembrane segment spans residues 154 to 174 (VLVLIAVLPVLLLQITVGLVF). Residues 175 to 209 (LCLQRRLRGKLWAEIENLHRTFDPHFLMVPCWKIT) lie on the Cytoplasmic side of the membrane. The chain crosses the membrane as a helical span at residues 210–230 (LFVIVPVLGPLVALIICYNWL). Over 231 to 246 (HRRLAGQFLEELRNPF) the chain is Extracellular.

The protein belongs to the immunoglobulin superfamily. BTN/MOG family. Homodimer. Found exclusively in the CNS, where it is localized on the surface of myelin and oligodendrocyte cytoplasmic membranes.

It is found in the membrane. Mediates homophilic cell-cell adhesion. Minor component of the myelin sheath. May be involved in completion and/or maintenance of the myelin sheath and in cell-cell communication. This Bos taurus (Bovine) protein is Myelin-oligodendrocyte glycoprotein (MOG).